A 398-amino-acid chain; its full sequence is MAKMTVKDLDLKGKKVLVRVDFNVPLKDGVITNDNRISAALPTIKYIIENGGRAILFSHLGRVKEEADKEGKSLAPVAKDLSAKLGTEVVFPGVTRGAELEEAINALEDGQVLLVENTRFEDVDGKKESKNDPELGKYWASLGDGIFVNDAFGTAHRAHASNVGISANVDKAVAGFLLENEIAYIKEAVEKPERPFVAILGGSKVSDKIGVIENLLEKADKVLIGGGMTYTFYKAQGIEIGNSLVEEDKLDIAKELLEKSNGKLILPVDSKEANAFADYTEVRDTEGEAVSEGFLGLDIGPKSIAKFEEALEGAKTVVWNGPMGVFENPDFQAGTIGVMDAIVKQPGVKSIIGGGDSAAAAINLGRADKFSWISTGGGASMELLEGKELPGLSALTEK.

Substrate is bound by residues 21–23 (DFN), Arg-36, 59–62 (HLGR), Arg-119, and Arg-157. ATP is bound by residues Lys-208, Gly-296, Glu-327, and 354–357 (GGDS).

This sequence belongs to the phosphoglycerate kinase family. As to quaternary structure, monomer.

Its subcellular location is the cytoplasm. The catalysed reaction is (2R)-3-phosphoglycerate + ATP = (2R)-3-phospho-glyceroyl phosphate + ADP. It functions in the pathway carbohydrate degradation; glycolysis; pyruvate from D-glyceraldehyde 3-phosphate: step 2/5. The chain is Phosphoglycerate kinase from Streptococcus uberis (strain ATCC BAA-854 / 0140J).